A 2065-amino-acid chain; its full sequence is MGDDSEWMKLPIDQKCEHKVWKARLNGYEEAVKLFQKIVDEKSPEWSKYLGLIKRFVTESNAVAQLKGLEAALVYVENAHVAGKTTGEVVNGVVNKVFNQPKARAKELGADICLMYVEIEKAEVVQEELLKGLDNKNPKIVVACVETVRKALSEFGSKIMTLKPIIKVLPKLFESREKAIRDEAKLLAVEIYRWIRDALRPPLQNINPVQLKELEEEWVKLPQSAPKQTRFLRSQQDLKAKFEQQQAAGDDGGDDGEEEIVPQVDAYELLEAVEILSKLPKDFYDKIEAKKWQERKEALEAVEALVKNPKIEAGDFADLVKALKTVVGKDTNVMLVALAAKCIAGLAAGLRKKFGSYAGHIVPTILEKFKEKKPQVVQALQEAIDAVFLTTTLQNISEDVLAVMDNKNPAIKQQTSLFLARSFRHCTPSTLPKSLLKPFCVALLKQINDSAPEVRDAAFEALGTAQKVVGEKAVNPFLAEVDKLKLDRIKECADKAELANGKKGGAAAGEKKETKAPAAAPGKPVPNQGAAAEKDAGKAAAAPKKAPAAKPGGPVKKAKAPASSGATAKGKKAVENKEIIEQELSPEACEERAAAVLPASCMQQLDSSNWKERLASMEEFQKTVESMERNDIPCQALVKMLAKKPGFKETNFQVMQMKLHIVALIAQKGNFSKTSACAVLDGLVDKVGDVKCGGNAKEALSGIAEACTLPWTAEQVVSLAFAQKNPKNQSETLNWLSNAIKEFGFTGINVKAFISNVKTALAATNPAIRTSAITLLGVMYLYMGAPLRMFFEEEKPALLSQIDAEFEKMKGQTPPVSIRGSKHGSGRDEGEEGEEQDEDAPADVTDLLPRTDISDKISSDLVSKIEDKNWKIRKEGLDEVTAIINEAKFIQPSIGELPSALKGRLNDSNKILVQQTLTILQQLSTAMGHNIKQHVKNLGMPIITVLGDSKANVRAAALGTLKSWVDQTGMKDWLEGEDLSEELKKENPFLRQELLGWLAEKLPSMRTVPSDLQLCVPYLYNCLEDRNGDVRKKAQEALPIFMMHIGFEKMSKATSKLKPASKDQVVALLEKAKASMPAKPAGPPGKASSKQPPAVAQASASPPPAASSDSGSSTSDYKPDPKKTKPGTQASKAKTQSVSSEGNTSLNPSNTSLTPSKANTSLSKAKPAKQTLPGKKAPSKPNAKDEEDKSGPIYIIVPNGKEQRVKDEKALKVLKWNFTTPRDEYIEQLKTQMSPCIARWLQDELFHADFQRQIKGLAVMTEHLESEKEGVISCLDLVLKWFTLRFFDTNTSVLMKCLEYLKLLFIMLSQEEYHLTEMEGTSFLPYLMLKVGEPKDIVRKDVRAILTKMCQVYPASKMFNFVMEGTKSKNSKQRAECLEELGCLVESYGMNVCQPTPAKALKEIAIHIGDRDTTVRNAALNTIVTVYNVHGEQVFKLIGNLSEKDMSMLEERIKRAGKKQAAAAPAKQVEEKPQRVQSANASILRKAPPEDMSSKLNQARNMGGHTEPSHSVPREFQLDLDEIENDNGTVRCEMPALVQHKLDEIFEPVLIPEPKIRAVSPHFDDMHSNTASTINFVISQVASVDINASIQALAQIDEVLRQEDKAEAMSGHIDQFLIATFMQLRLAYNTHMADERLDKDDIVRLYSCIIGNMISLFQMESLAREASTGVLKDLMHGLISLMLDARIEDLEEGQQVVRSVNLLVVKVLEKSDQTNIISALLMLLQDSLLATASSPNFSELVMKCLWRMIRLLPEAINNLNLDRILLDIHNFMRVLPKEKLKQHKSEMPMRTLKTLLHTLCKLKGPKIMDHLSMIENKHESELEAHLLRVMKHSIDRTGSKGDKETEKGASCIEDKVGKANVSDFLAEMFKKIGSKENTKEGLAELYEYKKKYSDADIKPFLKNSSQFFQSYVERGLRLIEMEREGKARIAPNTGMSTHVTEMTPLPTVTNTAAPVSNTNGEEVGPSVYLERLKILRQRCGLDNAKQDERPPLTSLLSKSSAPAVVSSTDMLHSKLSQLRESREQFQHVELDSNQTYPSTTTSSSASSTNIDDLKKRLERIKSSRK.

TOG stretches follow at residues 1 to 240 (MGDD…DLKA) and 264 to 515 (VDAY…KETK). HEAT repeat units follow at residues 120–157 (EKAEVVQEELLKGLDNKNPKIVVACVETVRKALSEFGS), 160–197 (MTLKPIIKVLPKLFESREKAIRDEAKLLAVEIYRWIRD), 270–311 (LEAV…NPKI), 314–352 (GDFADLVKALKTVVGKDTNVMLVALAAKCIAGLAAGLRK), 356–393 (SYAGHIVPTILEKFKEKKPQVVQALQEAIDAVFLTTTL), 395–432 (NISEDVLAVMDNKNPAIKQQTSLFLARSFRHCTPSTLP), and 436–477 (LKPF…VNPF). The interval 500 to 574 (NGKKGGAAAG…GATAKGKKAV (75 aa)) is disordered. Positions 538–568 (KAAAAPKKAPAAKPGGPVKKAKAPASSGATA) are enriched in low complexity. Residues 644-808 (KPGFKETNFQ…LSQIDAEFEK (165 aa)) are TOG 3. 2 HEAT repeats span residues 652-689 (FQVMQMKLHIVALIAQKGNFSKTSACAVLDGLVDKVGD) and 748-785 (INVKAFISNVKTALAATNPAIRTSAITLLGVMYLYMGA). The disordered stretch occupies residues 809 to 849 (MKGQTPPVSIRGSKHGSGRDEGEEGEEQDEDAPADVTDLLP). A compositionally biased stretch (acidic residues) spans 829–841 (EGEEGEEQDEDAP). The interval 846–1090 (DLLPRTDISD…AGPPGKASSK (245 aa)) is TOG 4. 4 HEAT repeats span residues 852–889 (DISDKISSDLVSKIEDKNWKIRKEGLDEVTAIINEAKF), 892–929 (PSIGELPSALKGRLNDSNKILVQQTLTILQQLSTAMGH), 933–970 (QHVKNLGMPIITVLGDSKANVRAAALGTLKSWVDQTGM), and 1015–1052 (CVPYLYNCLEDRNGDVRKKAQEALPIFMMHIGFEKMSK). Residues 1074–1115 (ASMPAKPAGPPGKASSKQPPAVAQASASPPPAASSDSGSSTS) are compositionally biased toward low complexity. The segment at 1074-1192 (ASMPAKPAGP…AKDEEDKSGP (119 aa)) is disordered. Residues 1126-1163 (PGTQASKAKTQSVSSEGNTSLNPSNTSLTPSKANTSLS) show a composition bias toward polar residues. The tract at residues 1150–1235 (NTSLTPSKAN…IEQLKTQMSP (86 aa)) is interaction with microtubule lattice. The interval 1191 to 1460 (GPIYIIVPNG…ERIKRAGKKQ (270 aa)) is TOG 5. 5 HEAT repeats span residues 1251–1288 (QRQIKGLAVMTEHLESEKEGVISCLDLVLKWFTLRFFD), 1295–1318 (MKCLEYLKLLFIMLSQEEYHLTEM), 1319–1355 (EGTSFLPYLMLKVGEPKDIVRKDVRAILTKMCQVYPA), 1357–1390 (KMFNFVMEGTKSKNSKQRAECLEELGCLVESYGM), and 1395–1432 (PTPAKALKEIAIHIGDRDTTVRNAALNTIVTVYNVHGE). Disordered stretches follow at residues 1982–2001 (DNAKQDERPPLTSLLSKSSA) and 2028–2065 (VELDSNQTYPSTTTSSSASSTNIDDLKKRLERIKSSRK). The interval 2002-2065 (PAVVSSTDML…RLERIKSSRK (64 aa)) is interaction with tacc3. Positions 2038-2048 (STTTSSSASST) are enriched in low complexity. Basic and acidic residues predominate over residues 2051-2065 (DDLKKRLERIKSSRK).

Belongs to the TOG/XMAP215 family. Interacts with tacc3; two molecules of ckap5 interact with 1 molecule of tacc3 probably mediated by coiled coil domains forming a four-helix bundle. Interacts with tacc3 and clathrin forming the TACC3/ch-TOG/clathrin complex located at spindle inter-microtubules bridges. Interacts with ndc80; indicative for an association with the NDC80 comnplex.

Its subcellular location is the cytoplasm. The protein resides in the cytoskeleton. It localises to the spindle pole. It is found in the spindle. The protein localises to the microtubule organizing center. Its subcellular location is the centrosome. The protein resides in the chromosome. It localises to the centromere. It is found in the kinetochore. In terms of biological role, binds to the plus end of microtubules and regulates microtubule dynamics and microtubule organization. Acts as a processive microtubule polymerase. Promotes cytoplasmic microtubule nucleation and elongation. Plays a major role in organizing spindle poles. In spindle formation protects kinetochore microtubules from depolymerization by kif2c and has an essential role in centrosomal microtubule assembly independently of kif2c activity. Contributes to centrosome integrity. Acts as a component of the TACC3/ch-TOG/clathrin complex proposed to contribute to stabilization of kinetochore fibers of the mitotic spindle by acting as inter-microtubule bridge. Enhances the strength of NDC80 complex-mediated kinetochore-tip microtubule attachments. This is Cytoskeleton-associated protein 5-A (ckap5-a) from Xenopus laevis (African clawed frog).